Consider the following 292-residue polypeptide: Glyoxylase B2 (292 aa).

Positions 72, 74, 76, 77, 148, and 166 each coordinate Zn(2+). Residues 175 to 181 (TARCDFP), 208 to 210 (HDY), and 284 to 287 (KIPL) each bind substrate. Histidine 208 contacts Zn(2+).

The protein belongs to the metallo-beta-lactamase superfamily. Glyoxalase II family. It depends on Zn(2+) as a cofactor.

This Dictyostelium discoideum (Social amoeba) protein is Glyoxylase B2 (gloB2).